A 315-amino-acid chain; its full sequence is Pantothenate synthetase (315 aa).

ATP is bound at residue 45–52 (MGALHEGH). Histidine 52 functions as the Proton donor in the catalytic mechanism. Glutamine 77 is a binding site for (R)-pantoate. Glutamine 77 provides a ligand contact to beta-alanine. 163-166 (GEKD) is a binding site for ATP. Glutamine 169 provides a ligand contact to (R)-pantoate. Residues valine 192 and 200–203 (MSSR) contribute to the ATP site.

This sequence belongs to the pantothenate synthetase family. As to quaternary structure, homodimer.

It is found in the cytoplasm. It carries out the reaction (R)-pantoate + beta-alanine + ATP = (R)-pantothenate + AMP + diphosphate + H(+). Its pathway is cofactor biosynthesis; (R)-pantothenate biosynthesis; (R)-pantothenate from (R)-pantoate and beta-alanine: step 1/1. In terms of biological role, catalyzes the condensation of pantoate with beta-alanine in an ATP-dependent reaction via a pantoyl-adenylate intermediate. The chain is Pantothenate synthetase from Mycobacterium ulcerans (strain Agy99).